Reading from the N-terminus, the 252-residue chain is Fructose-1,6-bisphosphatase/inositol-1-monophosphatase (252 aa).

E65, D81, I83, and D84 together coordinate Mg(2+). Residues 84–86, R170, F175, and R194 each bind substrate; that span reads DGS. D201 is a binding site for Mg(2+).

This sequence belongs to the inositol monophosphatase superfamily. FBPase class 4 family. In terms of assembly, homodimer. The cofactor is Mg(2+).

It catalyses the reaction beta-D-fructose 1,6-bisphosphate + H2O = beta-D-fructose 6-phosphate + phosphate. The enzyme catalyses a myo-inositol phosphate + H2O = myo-inositol + phosphate. Its activity is regulated as follows. IMPase activity is inhibited by Ca(2+) and Zn(2+). In contrast to mammalian I-1-P phosphatases, is not inhibited by Li(+) up to 100 mM. In terms of biological role, phosphatase with broad specificity; it can dephosphorylate fructose 1,6-bisphosphate, both D and L isomers of inositol-1-phosphate (I-1-P), 2'-AMP, pNPP, beta-glycerol phosphate, and alpha-D-glucose-1-phosphate. Cannot hydrolyze glucose-6-phosphate, fructose-6-phosphate, NAD(+) or 5'-AMP. May be involved in the biosynthesis of a unique osmolyte, di-myo-inositol 1,1-phosphate. This Methanocaldococcus jannaschii (strain ATCC 43067 / DSM 2661 / JAL-1 / JCM 10045 / NBRC 100440) (Methanococcus jannaschii) protein is Fructose-1,6-bisphosphatase/inositol-1-monophosphatase (suhB).